A 397-amino-acid chain; its full sequence is Bifunctional enzyme IspD/IspF (397 aa).

A 2-C-methyl-D-erythritol 4-phosphate cytidylyltransferase region spans residues 1–236 (MSIAAVILAA…QKKMQMFPDI (236 aa)). The interval 237-397 (RTGNGYDVHS…NVLYPGEIPK (161 aa)) is 2-C-methyl-D-erythritol 2,4-cyclodiphosphate synthase. The a divalent metal cation site is built by Asp-243 and His-245. 4-CDP-2-C-methyl-D-erythritol 2-phosphate is bound by residues 243–245 (DVH) and 269–270 (HS). His-277 contributes to the a divalent metal cation binding site. Residues 291–293 (DIG), 367–370 (TTNE), Phe-374, and Arg-377 contribute to the 4-CDP-2-C-methyl-D-erythritol 2-phosphate site.

It in the N-terminal section; belongs to the IspD/TarI cytidylyltransferase family. IspD subfamily. In the C-terminal section; belongs to the IspF family. A divalent metal cation serves as cofactor.

The enzyme catalyses 2-C-methyl-D-erythritol 4-phosphate + CTP + H(+) = 4-CDP-2-C-methyl-D-erythritol + diphosphate. The catalysed reaction is 4-CDP-2-C-methyl-D-erythritol 2-phosphate = 2-C-methyl-D-erythritol 2,4-cyclic diphosphate + CMP. Its pathway is isoprenoid biosynthesis; isopentenyl diphosphate biosynthesis via DXP pathway; isopentenyl diphosphate from 1-deoxy-D-xylulose 5-phosphate: step 2/6. It participates in isoprenoid biosynthesis; isopentenyl diphosphate biosynthesis via DXP pathway; isopentenyl diphosphate from 1-deoxy-D-xylulose 5-phosphate: step 4/6. Bifunctional enzyme that catalyzes the formation of 4-diphosphocytidyl-2-C-methyl-D-erythritol from CTP and 2-C-methyl-D-erythritol 4-phosphate (MEP) (IspD), and catalyzes the conversion of 4-diphosphocytidyl-2-C-methyl-D-erythritol 2-phosphate (CDP-ME2P) to 2-C-methyl-D-erythritol 2,4-cyclodiphosphate (ME-CPP) with a corresponding release of cytidine 5-monophosphate (CMP) (IspF). In Bartonella henselae (strain ATCC 49882 / DSM 28221 / CCUG 30454 / Houston 1) (Rochalimaea henselae), this protein is Bifunctional enzyme IspD/IspF.